Here is a 437-residue protein sequence, read N- to C-terminus: Aminopeptidase G (437 aa).

Residues cysteine 70, histidine 361, and asparagine 382 contribute to the active site.

It belongs to the peptidase C1 family.

It is found in the cytoplasm. The polypeptide is Aminopeptidase G (pepG) (Lactobacillus delbrueckii subsp. lactis).